A 117-amino-acid chain; its full sequence is Large ribosomal subunit protein eL34 (117 aa).

Serine 12 is modified (phosphoserine). Polar residues predominate over residues alanine 16–glutamine 28. The disordered stretch occupies residues alanine 16 to histidine 35. Residue lysine 108 forms a Glycyl lysine isopeptide (Lys-Gly) (interchain with G-Cter in SUMO2) linkage.

Belongs to the eukaryotic ribosomal protein eL34 family. Component of the large ribosomal subunit.

The protein resides in the cytoplasm. Its subcellular location is the cytosol. It is found in the endoplasmic reticulum. Functionally, component of the large ribosomal subunit. The ribosome is a large ribonucleoprotein complex responsible for the synthesis of proteins in the cell. The protein is Large ribosomal subunit protein eL34 (RPL34) of Vicugna pacos (Alpaca).